Here is a 138-residue protein sequence, read N- to C-terminus: Fusaristatin A biosynthesis cluster protein FGSG_08206 (138 aa).

A Stress-response A/B barrel domain is found at 33-130; it reads VHRVTMFKMP…TIDGMMTVFF (98 aa).

Its pathway is secondary metabolite biosynthesis. Part of the gene cluster that mediates the biosynthesis of the lipopeptide fusaristatin A. Fusaristatin A consists of a polyketide chain linked to three amino acid residues glutamine (Gln), dehydroalanine (dehydro-Ala), and beta-aminoisobutyric acid. The biosynthesis starts with formation of a linear polyketide chain by the highly reducing polyketide synthase PKS6. The gene cluster does not contain an acyl-CoA ligase or an acyl-transferase, and it is therefore predicted that the polyketide is transferred directly to the nonribosomal peptide synthetase NRPS7. Modules 1-3 from NRPS7 incorporate dehydro-Ala, Gln, and beta-aminoisobutyric acid in the compound, which is released by cyclization. The beta-aminoisobutyric acid units are most likely not freely available to the NRPS, but can be synthesized from thymine, which requires a dehydrogenase, a monooxygenase, and an aminotransferase. The fusaristatin A cluster contains a cytochrome P450 monooxygenase (FGSG_08207) and an aminotransferase (FGSG_17085), which theoretically can perform two of the enzymatic steps. The enzymes may however also be involved in biosynthesis of dehydroalanine or modification of the polyketide. The dehydro-Ala residue can be a result of cyclization, where serine is dehydrated. The last gene of the cluster encodes a protein with an A/B barrel domain found in variable enzymes, which hampers functional prediction. The chain is Fusaristatin A biosynthesis cluster protein FGSG_08206 from Gibberella zeae (strain ATCC MYA-4620 / CBS 123657 / FGSC 9075 / NRRL 31084 / PH-1) (Wheat head blight fungus).